We begin with the raw amino-acid sequence, 158 residues long: NADH-quinone oxidoreductase subunit B (158 aa).

Residues cysteine 37, cysteine 38, cysteine 102, and cysteine 132 each contribute to the [4Fe-4S] cluster site.

It belongs to the complex I 20 kDa subunit family. NDH-1 is composed of 14 different subunits. Subunits NuoB, C, D, E, F, and G constitute the peripheral sector of the complex. [4Fe-4S] cluster is required as a cofactor.

The protein resides in the cell inner membrane. It carries out the reaction a quinone + NADH + 5 H(+)(in) = a quinol + NAD(+) + 4 H(+)(out). In terms of biological role, NDH-1 shuttles electrons from NADH, via FMN and iron-sulfur (Fe-S) centers, to quinones in the respiratory chain. The immediate electron acceptor for the enzyme in this species is believed to be ubiquinone. Couples the redox reaction to proton translocation (for every two electrons transferred, four hydrogen ions are translocated across the cytoplasmic membrane), and thus conserves the redox energy in a proton gradient. The sequence is that of NADH-quinone oxidoreductase subunit B from Acidithiobacillus ferrooxidans (strain ATCC 23270 / DSM 14882 / CIP 104768 / NCIMB 8455) (Ferrobacillus ferrooxidans (strain ATCC 23270)).